A 506-amino-acid polypeptide reads, in one-letter code: Ribose import ATP-binding protein RbsA 1 (506 aa).

2 consecutive ABC transporter domains span residues 5 to 241 (LALT…VGRR) and 254 to 498 (RDAA…TSDA). 37-44 (GENGAGKS) serves as a coordination point for ATP.

The protein belongs to the ABC transporter superfamily. Ribose importer (TC 3.A.1.2.1) family. As to quaternary structure, the complex is composed of an ATP-binding protein (RbsA), two transmembrane proteins (RbsC) and a solute-binding protein (RbsB).

It is found in the cell inner membrane. The enzyme catalyses D-ribose(out) + ATP + H2O = D-ribose(in) + ADP + phosphate + H(+). Part of the ABC transporter complex RbsABC involved in ribose import. Responsible for energy coupling to the transport system. This Burkholderia thailandensis (strain ATCC 700388 / DSM 13276 / CCUG 48851 / CIP 106301 / E264) protein is Ribose import ATP-binding protein RbsA 1.